The sequence spans 183 residues: MPQPAKVLLLYAHPESQDSVANRVLLKPAIQHNNVTVHDLYARYPDFFIDTPYEQALLREHDVIVFQHPLYTYSCPALLKEWLDRVLSRGFASGPGGNQLVGKYWRSVITTGEPESAYRYDALNRYPMSDVLRPFELTAAMCRMHWMPPIIVYWARRQSPQTLASHAKAYGEWLANPVSAGGY.

Belongs to the NAD(P)H dehydrogenase (quinone) family. KefG subfamily. In terms of assembly, interacts with KefB.

The protein resides in the cell inner membrane. The enzyme catalyses a quinone + NADH + H(+) = a quinol + NAD(+). It carries out the reaction a quinone + NADPH + H(+) = a quinol + NADP(+). In terms of biological role, regulatory subunit of a potassium efflux system that confers protection against electrophiles. Required for full activity of KefB. The polypeptide is Glutathione-regulated potassium-efflux system ancillary protein KefG (Salmonella paratyphi B (strain ATCC BAA-1250 / SPB7)).